Consider the following 410-residue polypeptide: Lissencephaly-1 homolog B (410 aa).

Residues 7 to 39 (QRDELNRAIADYLRSNGYEEAYSTFKKEAELDM) form the LisH domain. Residues 56 to 82 (TSVIRLQKKVMELESKLNEAKEEITLG) are a coiled coil. 7 WD repeats span residues 106–147 (GHRS…RTLK), 148–187 (GHTDSVQDISFDQTGKLLASCSADMTIKLWDFQGFECIRT), 190–229 (GHDHNVSSVAIMPNGDHIVSASRDKTIKMWEVATGYCVKT), 232–271 (GHREWVRMVRPNQDGSLIASCSNDQTVRVWVATSKECKAE), 274–333 (EHEH…CLMT), 336–375 (GHDNWVRGVLVHPGGRFIVSCADDKTLRIWDYKNKRCMKT), and 378–410 (AHEHFVTSLDMHQTAPYVVTGSVDQTVKVWECR).

Belongs to the WD repeat LIS1/nudF family. In terms of assembly, can self-associate. Component of the cytosolic PAF-AH (I) heterotetrameric enzyme, which is composed of PAFAH1B1 (beta), PAFAH1B2 (alpha2) and PAFAH1B3 (alpha1) subunits. The catalytic activity of the enzyme resides in the alpha1 (PAFAH1B3) and alpha2 (PAFAH1B2) subunits, whereas the beta subunit (PAFAH1B1) has regulatory activity. Trimer formation is not essential for the catalytic activity. Interacts with dynein, dynactin, nde1 and ndel1.

The protein localises to the cytoplasm. The protein resides in the cytoskeleton. It is found in the microtubule organizing center. Its subcellular location is the centrosome. Functionally, regulatory subunit (beta subunit) of the cytosolic type I platelet-activating factor (PAF) acetylhydrolase (PAF-AH (I)), an enzyme that catalyzes the hydrolyze of the acetyl group at the sn-2 position of PAF and its analogs and participates in PAF inactivation. Regulates the PAF-AH (I) activity in a catalytic dimer composition-dependent manner. Positively regulates the activity of the minus-end directed microtubule motor protein dynein. May enhance dynein-mediated microtubule sliding by targeting dynein to the microtubule plus end. Required for several dynein- and microtubule-dependent processes such as the maintenance of Golgi integrity, the peripheral transport of microtubule fragments and the coupling of the nucleus and centrosome. May be required for proliferation of neuronal precursors and neuronal migration. The sequence is that of Lissencephaly-1 homolog B (pafah1b1-2) from Salmo salar (Atlantic salmon).